The primary structure comprises 399 residues: Cyclic dehypoxanthine futalosine synthase (399 aa).

Positions 56-288 (ATYIIERNIN…IAIARVFLDN (233 aa)) constitute a Radical SAM core domain. [4Fe-4S] cluster contacts are provided by Cys70, Cys74, and Cys77.

The protein belongs to the radical SAM superfamily. MqnC family. It depends on [4Fe-4S] cluster as a cofactor.

It carries out the reaction dehypoxanthine futalosine + S-adenosyl-L-methionine = cyclic dehypoxanthinylfutalosinate + 5'-deoxyadenosine + L-methionine + H(+). The protein operates within quinol/quinone metabolism; menaquinone biosynthesis. Functionally, radical SAM enzyme that catalyzes the cyclization of dehypoxanthine futalosine (DHFL) into cyclic dehypoxanthine futalosine (CDHFL), a step in the biosynthesis of menaquinone (MK, vitamin K2). This Streptomyces coelicolor (strain ATCC BAA-471 / A3(2) / M145) protein is Cyclic dehypoxanthine futalosine synthase.